A 360-amino-acid polypeptide reads, in one-letter code: Ubiquitin carboxyl-terminal hydrolase MIY1 (360 aa).

Cysteine 28 acts as the Nucleophile in catalysis. Histidine 216 (proton acceptor) is an active-site residue. The segment at 317–360 (KRKIHSHKKNSEIHAPVKKDKFKRRSSLLNAKASEKEKSECVVM) is disordered. 2 stretches are compositionally biased toward basic and acidic residues: residues 325–335 (KNSEIHAPVKK) and 349–360 (ASEKEKSECVVM).

Belongs to the MINDY deubiquitinase family. FAM63 subfamily.

It is found in the cytoplasm. The enzyme catalyses Thiol-dependent hydrolysis of ester, thioester, amide, peptide and isopeptide bonds formed by the C-terminal Gly of ubiquitin (a 76-residue protein attached to proteins as an intracellular targeting signal).. Functionally, hydrolase that can specifically remove 'Lys-48'-linked conjugated ubiquitin from proteins. Has endodeubiquitinase activity. This is Ubiquitin carboxyl-terminal hydrolase MIY1 from Saccharomyces cerevisiae (strain ATCC 204508 / S288c) (Baker's yeast).